Here is a 421-residue protein sequence, read N- to C-terminus: Vasopressin V1b receptor (421 aa).

Over methionine 1–lysine 35 the chain is Extracellular. Residue asparagine 21 is glycosylated (N-linked (GlcNAc...) asparagine). The chain crosses the membrane as a helical span at residues valine 36–leucine 59. Residues glycine 60–leucine 71 are Cytoplasmic-facing. Residues phenylalanine 72–leucine 93 traverse the membrane as a helical segment. The Extracellular portion of the chain corresponds to tryptophan 94 to arginine 108. A disulfide bridge connects residues cysteine 107 and cysteine 186. Residues alanine 109–leucine 130 traverse the membrane as a helical segment. At aspartate 131 to tyrosine 151 the chain is on the cytoplasmic side. Residues proline 152 to serine 173 form a helical membrane-spanning segment. At leucine 174 to tryptophan 202 the chain is on the extracellular side. A helical membrane pass occupies residues threonine 203–cysteine 223. Topologically, residues histidine 224–threonine 280 are cytoplasmic. The helical transmembrane segment at phenylalanine 281 to tryptophan 300 threads the bilayer. Topologically, residues serine 301–threonine 318 are extracellular. Residues isoleucine 319–phenylalanine 338 form a helical membrane-spanning segment. Topologically, residues asparagine 339 to serine 421 are cytoplasmic. The segment at lysine 399–serine 421 is disordered.

The protein belongs to the G-protein coupled receptor 1 family. Vasopressin/oxytocin receptor subfamily.

Its subcellular location is the cell membrane. Its function is as follows. Receptor for arginine vasopressin. The activity of this receptor is mediated by G proteins which activate a phosphatidyl-inositol-calcium second messenger system. The polypeptide is Vasopressin V1b receptor (Avpr1b) (Mus musculus (Mouse)).